The following is a 275-amino-acid chain: Methylesterase 10 (275 aa).

Ser-96 acts as the Acyl-ester intermediate in catalysis. Active-site charge relay system residues include Asp-225 and His-253.

This sequence belongs to the AB hydrolase superfamily. Methylesterase family.

It carries out the reaction methyl (-)-jasmonate + H2O = jasmonate + methanol + H(+). It participates in plant hormone biosynthesis. Its pathway is lipid metabolism; oxylipin biosynthesis. Methylesterase shown to have methyl jasmonate (MeJA) esterase activity in vitro. The chain is Methylesterase 10 from Arabidopsis thaliana (Mouse-ear cress).